The chain runs to 500 residues: Aspartyl/glutamyl-tRNA(Asn/Gln) amidotransferase subunit B (500 aa).

It belongs to the GatB/GatE family. GatB subfamily. In terms of assembly, heterotrimer of A, B and C subunits.

It carries out the reaction L-glutamyl-tRNA(Gln) + L-glutamine + ATP + H2O = L-glutaminyl-tRNA(Gln) + L-glutamate + ADP + phosphate + H(+). The catalysed reaction is L-aspartyl-tRNA(Asn) + L-glutamine + ATP + H2O = L-asparaginyl-tRNA(Asn) + L-glutamate + ADP + phosphate + 2 H(+). In terms of biological role, allows the formation of correctly charged Asn-tRNA(Asn) or Gln-tRNA(Gln) through the transamidation of misacylated Asp-tRNA(Asn) or Glu-tRNA(Gln) in organisms which lack either or both of asparaginyl-tRNA or glutaminyl-tRNA synthetases. The reaction takes place in the presence of glutamine and ATP through an activated phospho-Asp-tRNA(Asn) or phospho-Glu-tRNA(Gln). This chain is Aspartyl/glutamyl-tRNA(Asn/Gln) amidotransferase subunit B, found in Rhizobium leguminosarum bv. trifolii (strain WSM2304).